We begin with the raw amino-acid sequence, 329 residues long: Phenylalanine--tRNA ligase alpha subunit (329 aa).

The protein belongs to the class-II aminoacyl-tRNA synthetase family. Phe-tRNA synthetase alpha subunit type 1 subfamily. As to quaternary structure, tetramer of two alpha and two beta subunits. The cofactor is Mg(2+).

It localises to the cytoplasm. It carries out the reaction tRNA(Phe) + L-phenylalanine + ATP = L-phenylalanyl-tRNA(Phe) + AMP + diphosphate + H(+). The chain is Phenylalanine--tRNA ligase alpha subunit (pheS) from Buchnera aphidicola subsp. Acyrthosiphon pisum (strain APS) (Acyrthosiphon pisum symbiotic bacterium).